Consider the following 274-residue polypeptide: Glutamate racemase (274 aa).

Substrate is bound by residues 9 to 10 (DS) and 41 to 42 (YG). Cysteine 72 functions as the Proton donor/acceptor in the catalytic mechanism. Position 73–74 (73–74 (NT)) interacts with substrate. Cysteine 184 (proton donor/acceptor) is an active-site residue. 185–186 (TH) lines the substrate pocket.

Belongs to the aspartate/glutamate racemases family.

The catalysed reaction is L-glutamate = D-glutamate. It functions in the pathway cell wall biogenesis; peptidoglycan biosynthesis. Functionally, provides the (R)-glutamate required for cell wall biosynthesis. This chain is Glutamate racemase, found in Oceanobacillus iheyensis (strain DSM 14371 / CIP 107618 / JCM 11309 / KCTC 3954 / HTE831).